The following is a 105-amino-acid chain: Nucleoid-associated protein ABO_1774 (105 aa).

The tract at residues 85 to 105 is disordered; it reads QQQDSMQNMAGGFPFPPGFKP.

Belongs to the YbaB/EbfC family. As to quaternary structure, homodimer.

It localises to the cytoplasm. The protein resides in the nucleoid. Binds to DNA and alters its conformation. May be involved in regulation of gene expression, nucleoid organization and DNA protection. This chain is Nucleoid-associated protein ABO_1774, found in Alcanivorax borkumensis (strain ATCC 700651 / DSM 11573 / NCIMB 13689 / SK2).